The chain runs to 395 residues: MAKQRFERTKPHVNIGTIGHVDHGKTTLTAAITKVLAEKGKAQFMAYDAIDKAPEERERGITINTSHVEYETDARHYAHVDCPGHADYVKNMITGAAQMDGAILVVSAADGPMPQTREHILLARQVGVPAIVVFLNKCDMVDDEELLELVELEVRELLNQYEFPGDEIPFIRGSALKALEGDPKYVKAIEELMDAVDSYIPTPQRDADKPFLMPIEDVFTITGRGTVVTGRVERGKCKVGDQVEIVGLREESKTTVVTGLEMFRKILDEVQAGDNVGALLRGIEKKEVERGQVLAKPGSIKPHTKFSGAIYVLTKEEGGRHSPFFNGYRPQFYFRTTDVTGTIKLPEGVEMVMPGDNVEIAVELIHPIAIEEGLRFAVREGGRTVASGRVTKVSE.

In terms of domain architecture, tr-type G spans 10 to 204 (KPHVNIGTIG…AVDSYIPTPQ (195 aa)). The segment at 19–26 (GHVDHGKT) is G1. A GTP-binding site is contributed by 19–26 (GHVDHGKT). Residue T26 participates in Mg(2+) binding. The tract at residues 60–64 (GITIN) is G2. Residues 81 to 84 (DCPG) are G3. Residues 81–85 (DCPGH) and 136–139 (NKCD) each bind GTP. The tract at residues 136-139 (NKCD) is G4. The segment at 174-176 (SAL) is G5.

Belongs to the TRAFAC class translation factor GTPase superfamily. Classic translation factor GTPase family. EF-Tu/EF-1A subfamily. As to quaternary structure, monomer.

Its subcellular location is the cytoplasm. The catalysed reaction is GTP + H2O = GDP + phosphate + H(+). GTP hydrolase that promotes the GTP-dependent binding of aminoacyl-tRNA to the A-site of ribosomes during protein biosynthesis. This chain is Elongation factor Tu, found in Symbiobacterium thermophilum (strain DSM 24528 / JCM 14929 / IAM 14863 / T).